The following is an 846-amino-acid chain: Vacuolar-sorting protein BRO1 (846 aa).

A BRO1 domain is found at 5 to 403 (SLSNLMLAIH…ERLQQASELT (399 aa)). Residues 565–592 (LKQSLRQLENLGAQRAGLEDMLKEMKRK) adopt a coiled-coil conformation. The disordered stretch occupies residues 726–846 (SFQDHRSSGP…PHQGGGYYRQ (121 aa)). 2 stretches are compositionally biased toward low complexity: residues 763–780 (APYY…YSIP) and 790–823 (TPHG…QGQQ). A compositionally biased stretch (pro residues) spans 824 to 836 (PRPPYPGQSPYQP).

As to quaternary structure, homodimer. Interacts with AMSH3. Interacts with VPS32.1/SNF7B and VPS32.2/SNF7A. Interacts with ELC/VPS23A.

The protein localises to the cytoplasm. It is found in the late endosome. Its subcellular location is the endosome. It localises to the multivesicular body. In terms of biological role, class E VPS protein involved in concentration and sorting of cargo proteins of the multivesicular body (MVB) for incorporation into intralumenal vesicles. Fusion between endosomes and the vacuole will then target the cargo proteins to the vacuolar lumen. Associates with FREE1 and ELC to perform function in the ESCRT-I complex. Binds ubiquitin in vitro. Plays a role in the biogenesis of vacuole and multivesicular bodies (MVBs). Required for the endosomal location of AMSH3. Mediates high-affinity phosphate transporter trafficking to maintain phosphate homeostasis. Regulates vacuolar degradation of PHT1-1. The chain is Vacuolar-sorting protein BRO1 from Arabidopsis thaliana (Mouse-ear cress).